The chain runs to 176 residues: Cytochrome b (176 aa).

The next 3 helical transmembrane spans lie at 33 to 53, 77 to 98, and 113 to 133; these read FGSL…FLAM, WLLR…YLHI, and WNVG…GYVL. 2 residues coordinate heme b: histidine 83 and histidine 97.

The protein belongs to the cytochrome b family. As to quaternary structure, the cytochrome bc1 complex contains 11 subunits: 3 respiratory subunits (MT-CYB, CYC1 and UQCRFS1), 2 core proteins (UQCRC1 and UQCRC2) and 6 low-molecular weight proteins (UQCRH/QCR6, UQCRB/QCR7, UQCRQ/QCR8, UQCR10/QCR9, UQCR11/QCR10 and a cleavage product of UQCRFS1). This cytochrome bc1 complex then forms a dimer. It depends on heme b as a cofactor.

The protein localises to the mitochondrion inner membrane. Functionally, component of the ubiquinol-cytochrome c reductase complex (complex III or cytochrome b-c1 complex) that is part of the mitochondrial respiratory chain. The b-c1 complex mediates electron transfer from ubiquinol to cytochrome c. Contributes to the generation of a proton gradient across the mitochondrial membrane that is then used for ATP synthesis. This chain is Cytochrome b (MT-CYB), found in Eumops perotis (Western bonneted bat).